The primary structure comprises 53 residues: Metallocarboxypeptidase inhibitor (53 aa).

3 disulfide bridges follow: C9–C23, C15–C51, and C27–C38. Residue A53 coordinates Zn(2+).

Monomer. Interacts (via C-terminus) with human CPA4.

Metallocarboxypeptidase inhibitor. Has an inhibitory effect on bovine CPA1 and CPB2, human CPA1, CPA2, CPA4, CPB1 and CPB2, and porcine CPB1. Does not inhibit D.melanogaster svr (carboxypeptidase D). Shows no activity against serine proteases subtilisin or bovine trypsin, cysteine protease papain, and aspartyl protease porcine pepsin. In Nerita versicolor (Four-tooth nerite), this protein is Metallocarboxypeptidase inhibitor.